Here is a 673-residue protein sequence, read N- to C-terminus: Exoribonuclease 2 (673 aa).

The 326-residue stretch at 191 to 516 (RTDLTATPFF…NHRLLKAVIA (326 aa)) folds into the RNB domain. The region spanning 562–645 (DKVFNAEIID…ETRSLIAKPA (84 aa)) is the S1 motif domain. The disordered stretch occupies residues 650–673 (PGPAPVAPTSEADATPADEAPKAE).

Belongs to the RNR ribonuclease family. RNase II subfamily.

Its subcellular location is the cytoplasm. It catalyses the reaction Exonucleolytic cleavage in the 3'- to 5'-direction to yield nucleoside 5'-phosphates.. In terms of biological role, involved in mRNA degradation. Hydrolyzes single-stranded polyribonucleotides processively in the 3' to 5' direction. The protein is Exoribonuclease 2 of Aeromonas hydrophila subsp. hydrophila (strain ATCC 7966 / DSM 30187 / BCRC 13018 / CCUG 14551 / JCM 1027 / KCTC 2358 / NCIMB 9240 / NCTC 8049).